Reading from the N-terminus, the 196-residue chain is Peptidyl-tRNA hydrolase (196 aa).

Residue Tyr14 coordinates tRNA. The Proton acceptor role is filled by His19. 3 residues coordinate tRNA: Phe64, Asn66, and Asn112.

The protein belongs to the PTH family. In terms of assembly, monomer.

The protein resides in the cytoplasm. The catalysed reaction is an N-acyl-L-alpha-aminoacyl-tRNA + H2O = an N-acyl-L-amino acid + a tRNA + H(+). Its function is as follows. Hydrolyzes ribosome-free peptidyl-tRNAs (with 1 or more amino acids incorporated), which drop off the ribosome during protein synthesis, or as a result of ribosome stalling. Catalyzes the release of premature peptidyl moieties from peptidyl-tRNA molecules trapped in stalled 50S ribosomal subunits, and thus maintains levels of free tRNAs and 50S ribosomes. The polypeptide is Peptidyl-tRNA hydrolase (Solibacter usitatus (strain Ellin6076)).